Reading from the N-terminus, the 505-residue chain is Maturase K (505 aa).

The protein belongs to the intron maturase 2 family. MatK subfamily.

It is found in the plastid. The protein resides in the chloroplast. Functionally, usually encoded in the trnK tRNA gene intron. Probably assists in splicing its own and other chloroplast group II introns. The protein is Maturase K of Gomphrena pulchella (Globe amaranth).